The sequence spans 323 residues: Methenyltetrahydromethanopterin cyclohydrolase (323 aa).

It belongs to the MCH family.

Its subcellular location is the cytoplasm. It catalyses the reaction 5,10-methenyl-5,6,7,8-tetrahydromethanopterin + H2O = N(5)-formyl-5,6,7,8-tetrahydromethanopterin + H(+). Its pathway is one-carbon metabolism; methanogenesis from CO(2); 5,10-methenyl-5,6,7,8-tetrahydromethanopterin from CO(2): step 3/3. Its function is as follows. Catalyzes the reversible interconversion of 5-formyl-H(4)MPT to methenyl-H(4)MPT(+). This chain is Methenyltetrahydromethanopterin cyclohydrolase, found in Methanococcus maripaludis (strain DSM 14266 / JCM 13030 / NBRC 101832 / S2 / LL).